A 437-amino-acid polypeptide reads, in one-letter code: Dolichyl-diphosphooligosaccharide--protein glycosyltransferase 48 kDa subunit (437 aa).

An N-terminal signal peptide occupies residues 1–24 (MASLRVSVLLVAASCLLLGSGLRA). The Lumenal portion of the chain corresponds to 25–407 (GPRTLVLLEN…QYERFIPSAY (383 aa)). Residues 408 to 428 (PYYASAFSVMFGLFIFSIVFL) form a helical membrane-spanning segment. Residues 429 to 437 (HMKEKEKSD) are Cytoplasmic-facing.

Belongs to the DDOST 48 kDa subunit family. In terms of assembly, component of the oligosaccharyltransferase (OST) complex.

Its subcellular location is the endoplasmic reticulum membrane. It participates in protein modification; protein glycosylation. Its function is as follows. Subunit of the oligosaccharyl transferase (OST) complex that catalyzes the initial transfer of a defined glycan (Glc(3)Man(9)GlcNAc(2) in eukaryotes) from the lipid carrier dolichol-pyrophosphate to an asparagine residue within an Asn-X-Ser/Thr consensus motif in nascent polypeptide chains, the first step in protein N-glycosylation. N-glycosylation occurs cotranslationally and the complex associates with the Sec61 complex at the channel-forming translocon complex that mediates protein translocation across the endoplasmic reticulum (ER). All subunits are required for a maximal enzyme activity. Required for the assembly of both SST3A- and SS3B-containing OST complexes. This is Dolichyl-diphosphooligosaccharide--protein glycosyltransferase 48 kDa subunit from Xenopus tropicalis (Western clawed frog).